A 282-amino-acid chain; its full sequence is MAVPETRPNHTIYINNLNEKIKKDELKKSLYAIFSQFGQILDILVSRSLKMRGQAFVIFKEVSSATNALRSMQGFPFYDKPMRIQYAKTDSDIIAKMKGTFVERDRKREKRKPKSQETPATKKAVQGGGATPVVGAVQGPVPGMPPMTQAPRIMHHMPGQPPYMPPPGMIPPPGLAPGQIPPGAMPPQQLMPGQMPPAQPLSENPPNHILFLTNLPEETNELMLSMLFNQFPGFKEVRLVPGRHDIAFVEFDNEVQAGAARDALQGFKITQNNAMKISFAKK.

A2 carries the N-acetylalanine modification. The RRM 1 domain occupies 10–89 (HTIYINNLNE…KPMRIQYAKT (80 aa)). Residue K60 is modified to N6-acetyllysine. The interval 100 to 132 (TFVERDRKREKRKPKSQETPATKKAVQGGGATP) is disordered. Position 131 is a phosphothreonine (T131). R152 carries the post-translational modification Omega-N-methylarginine. In terms of domain architecture, RRM 2 spans 208-282 (HILFLTNLPE…NAMKISFAKK (75 aa)).

Belongs to the RRM U1 A/B'' family. In terms of assembly, U1 snRNP is composed of the 7 core Sm proteins SNRPB, SNRPD1, SNRPD2, SNRPD3, SNRPE, SNRPF and SNRPG that assemble in a heptameric protein ring on the Sm site of the small nuclear RNA to form the core snRNP, and at least three U1 snRNP-specific proteins SNRNP70/U1-70K, SNRPA/U1-A and SNRPC/U1-C. Interacts with SFPQ; component of a snRNP-free complex with SFPQ. Interacts with IVNS1ABP (via BACK domain); the interaction is indirect.

The protein resides in the nucleus. Its function is as follows. Component of the spliceosomal U1 snRNP, which is essential for recognition of the pre-mRNA 5' splice-site and the subsequent assembly of the spliceosome. U1 snRNP is the first snRNP to interact with pre-mRNA. This interaction is required for the subsequent binding of U2 snRNP and the U4/U6/U5 tri-snRNP. SNRPA binds stem loop II of U1 snRNA. In a snRNP-free form (SF-A) may be involved in coupled pre-mRNA splicing and polyadenylation process. May bind preferentially to the 5'-UGCAC-3' motif on RNAs. The sequence is that of U1 small nuclear ribonucleoprotein A (SNRPA) from Homo sapiens (Human).